The sequence spans 468 residues: Glutamate--tRNA ligase (468 aa).

The short motif at 8-18 (PSPTGFLHVGG) is the 'HIGH' region element. 4 residues coordinate Zn(2+): Cys97, Cys99, Cys124, and Asp126. Positions 236 to 240 (KLSKR) match the 'KMSKS' region motif. Position 239 (Lys239) interacts with ATP.

This sequence belongs to the class-I aminoacyl-tRNA synthetase family. Glutamate--tRNA ligase type 1 subfamily. In terms of assembly, monomer. The cofactor is Zn(2+).

It localises to the cytoplasm. The enzyme catalyses tRNA(Glu) + L-glutamate + ATP = L-glutamyl-tRNA(Glu) + AMP + diphosphate. Functionally, catalyzes the attachment of glutamate to tRNA(Glu) in a two-step reaction: glutamate is first activated by ATP to form Glu-AMP and then transferred to the acceptor end of tRNA(Glu). The protein is Glutamate--tRNA ligase of Francisella tularensis subsp. holarctica (strain FTNF002-00 / FTA).